Reading from the N-terminus, the 129-residue chain is Glycine cleavage system H protein (129 aa).

One can recognise a Lipoyl-binding domain in the interval 24 to 106 (TYTVGITEHA…YAGGWIFKIK (83 aa)). K65 is subject to N6-lipoyllysine.

The protein belongs to the GcvH family. In terms of assembly, the glycine cleavage system is composed of four proteins: P, T, L and H. Requires (R)-lipoate as cofactor.

Its function is as follows. The glycine cleavage system catalyzes the degradation of glycine. The H protein shuttles the methylamine group of glycine from the P protein to the T protein. The polypeptide is Glycine cleavage system H protein (Escherichia coli O7:K1 (strain IAI39 / ExPEC)).